The following is an 82-amino-acid chain: Cytochrome b559 subunit alpha (82 aa).

Residues Val-22–Tyr-36 form a helical membrane-spanning segment. His-24 contributes to the heme binding site.

It belongs to the PsbE/PsbF family. Heterodimer of an alpha subunit and a beta subunit. PSII is composed of 1 copy each of membrane proteins PsbA, PsbB, PsbC, PsbD, PsbE, PsbF, PsbH, PsbI, PsbJ, PsbK, PsbL, PsbM, PsbT, PsbX, PsbY, Psb30/Ycf12, peripheral proteins PsbO, CyanoQ (PsbQ), PsbU, PsbV and a large number of cofactors. It forms dimeric complexes. Heme b serves as cofactor.

The protein localises to the cellular thylakoid membrane. Its function is as follows. This b-type cytochrome is tightly associated with the reaction center of photosystem II (PSII). PSII is a light-driven water:plastoquinone oxidoreductase that uses light energy to abstract electrons from H(2)O, generating O(2) and a proton gradient subsequently used for ATP formation. It consists of a core antenna complex that captures photons, and an electron transfer chain that converts photonic excitation into a charge separation. This chain is Cytochrome b559 subunit alpha, found in Prochlorococcus marinus (strain MIT 9303).